The chain runs to 346 residues: Putative aquaporin-7B (346 aa).

Topologically, residues 1–40 (MVQASGHRRSTRGSKMVSWSVIAKIQEIWCEEDERKMVRE) are cytoplasmic. The helical transmembrane segment at 41–58 (FLAEFMSTYVMMVFGLGS) threads the bilayer. Residues 59 to 71 (VAHMVLNKTYGSY) are Extracellular-facing. A helical membrane pass occupies residues 72-89 (LGVNLGFGFGVTMGVHVA). Topologically, residues 90-93 (GRIS) are cytoplasmic. The discontinuously helical intramembrane region spans 94–107 (GAHMNAAVTFTNCA). An NPA 1 motif is present at residues 98–100 (NAA). At 108–115 (LGRVPWRK) the chain is on the cytoplasmic side. A helical transmembrane segment spans residues 116-136 (FPVHVLGQFLGSFLAAATIYS). Over 137 to 174 (LFYTAILHFSGGELMVTGPFATAGIFATYLPDHMTLWR) the chain is Extracellular. Residues 175–192 (GFLNEEWLTRMLQLCLFT) form a helical membrane-spanning segment. At 193–204 (ITDQENNPALPG) the chain is on the cytoplasmic side. Residues 205-221 (THALVISILVVIIRVSH) form a helical membrane-spanning segment. At 222 to 225 (GINT) the chain is on the extracellular side. Positions 226–239 (GYAINPSRDPPPSI) form an intramembrane region, discontinuously helical. Residues 230-232 (NPS) carry the NPA 2 motif. Topologically, residues 240–257 (FTFIAGWGKQVFSDGENW) are extracellular. The helical transmembrane segment at 258-279 (WWVPVVAPLLGASLGGIIYLVF) threads the bilayer. Residues 280-346 (IGSTIPREPL…LHESMALEHF (67 aa)) are Cytoplasmic-facing.

The protein belongs to the MIP/aquaporin (TC 1.A.8) family. As to quaternary structure, homotetramer; each monomer provides an independent glycerol/water pore.

The protein resides in the membrane. The enzyme catalyses glycerol(in) = glycerol(out). It carries out the reaction H2O(in) = H2O(out). Functionally, aquaglyceroporins form homotetrameric transmembrane channels, with each monomer independently mediating glycerol and water transport across the plasma membrane along their osmotic gradient. This chain is Putative aquaporin-7B, found in Homo sapiens (Human).